A 761-amino-acid polypeptide reads, in one-letter code: Elongation factor G, mitochondrial (761 aa).

A mitochondrion-targeting transit peptide spans 1–33; that stretch reads MTSVLRGVLKTHLPRTLTLPRCARNFQTTTFLR. Residues 66–347 enclose the tr-type G domain; that stretch reads TRLRNIGISA…SVVDYLPQPN (282 aa). GTP is bound by residues 75–82, 146–150, and 200–203; these read AHIDSGKT, DTPGH, and NKMD.

Belongs to the TRAFAC class translation factor GTPase superfamily. Classic translation factor GTPase family. EF-G/EF-2 subfamily.

It localises to the mitochondrion. It functions in the pathway protein biosynthesis; polypeptide chain elongation. Mitochondrial GTPase that catalyzes the GTP-dependent ribosomal translocation step during translation elongation. During this step, the ribosome changes from the pre-translocational (PRE) to the post-translocational (POST) state as the newly formed A-site-bound peptidyl-tRNA and P-site-bound deacylated tRNA move to the P and E sites, respectively. Catalyzes the coordinated movement of the two tRNA molecules, the mRNA and conformational changes in the ribosome. In Candida dubliniensis (strain CD36 / ATCC MYA-646 / CBS 7987 / NCPF 3949 / NRRL Y-17841) (Yeast), this protein is Elongation factor G, mitochondrial.